The following is a 147-amino-acid chain: Succinate dehydrogenase assembly factor 2, mitochondrial (147 aa).

It belongs to the SDHAF2 family. Interacts with the flavoprotein subunit within the SDH catalytic dimer.

The protein resides in the mitochondrion matrix. Plays an essential role in the assembly of succinate dehydrogenase (SDH), an enzyme complex (also referred to as respiratory complex II) that is a component of both the tricarboxylic acid (TCA) cycle and the mitochondrial electron transport chain, and which couples the oxidation of succinate to fumarate with the reduction of ubiquinone (coenzyme Q) to ubiquinol. Required for flavinylation (covalent attachment of FAD) of the flavoprotein subunit of the SDH catalytic dimer. The polypeptide is Succinate dehydrogenase assembly factor 2, mitochondrial (Drosophila grimshawi (Hawaiian fruit fly)).